The following is a 457-amino-acid chain: Protein translocase subunit SecY (457 aa).

The next 10 membrane-spanning stretches (helical) occupy residues 17 to 37 (IFFTFSLLALCRIGVFIPVPG), 75 to 95 (IALGVVPYISASIIVQLLVVF), 118 to 138 (TRLFTLVLACVQSLLFAKFAL), 162 to 182 (WVFYLTTVVVMITGTLLLMWV), 195 to 215 (ISLIITLGILASFPSVLGSIF), 230 to 250 (IVSLLILCAVFVFVLMATVLI), 287 to 307 (VIPVIFASSLLMFPATIGQFL), 326 to 346 (VAYSIFYVLLIIFFTYFWTAT), 386 to 406 (LLGAVFLAVVAILPSILGRIL), and 412 to 432 (VSYFLGGTAMLIVVGVILDTM).

The protein belongs to the SecY/SEC61-alpha family. Component of the Sec protein translocase complex. Heterotrimer consisting of SecY, SecE and SecG subunits. The heterotrimers can form oligomers, although 1 heterotrimer is thought to be able to translocate proteins. Interacts with the ribosome. Interacts with SecDF, and other proteins may be involved. Interacts with SecA.

It is found in the cell inner membrane. Functionally, the central subunit of the protein translocation channel SecYEG. Consists of two halves formed by TMs 1-5 and 6-10. These two domains form a lateral gate at the front which open onto the bilayer between TMs 2 and 7, and are clamped together by SecE at the back. The channel is closed by both a pore ring composed of hydrophobic SecY resides and a short helix (helix 2A) on the extracellular side of the membrane which forms a plug. The plug probably moves laterally to allow the channel to open. The ring and the pore may move independently. The sequence is that of Protein translocase subunit SecY from Chlamydia trachomatis serovar D (strain ATCC VR-885 / DSM 19411 / UW-3/Cx).